The chain runs to 396 residues: Ornithine aminotransferase 2 (396 aa).

Lys-255 carries the N6-(pyridoxal phosphate)lysine modification.

Belongs to the class-III pyridoxal-phosphate-dependent aminotransferase family. OAT subfamily. Requires pyridoxal 5'-phosphate as cofactor.

The protein resides in the cytoplasm. The catalysed reaction is a 2-oxocarboxylate + L-ornithine = L-glutamate 5-semialdehyde + an L-alpha-amino acid. Its pathway is amino-acid biosynthesis; L-proline biosynthesis; L-glutamate 5-semialdehyde from L-ornithine: step 1/1. Functionally, catalyzes the interconversion of ornithine to glutamate semialdehyde. This chain is Ornithine aminotransferase 2, found in Staphylococcus aureus (strain MRSA252).